Consider the following 140-residue polypeptide: Thymic stromal lymphopoietin (140 aa).

Residues 1-19 (MVLLRSLFILQVLVRMGLT) form the signal peptide. Residues Asn-21 and Asn-26 are each glycosylated (N-linked (GlcNAc...) asparagine). 3 disulfide bridges follow: Cys-25/Cys-98, Cys-57/Cys-63, and Cys-78/Cys-121. An N-linked (GlcNAc...) asparagine glycan is attached at Asn-123.

Interacts with a receptor composed of CRLF2 and IL7R. Binding of TSLP to CRLF2/TSLPR is a mechanistic prerequisite for recruitment of IL7R to the high-affinity ternary complex.

It localises to the secreted. In terms of biological role, cytokine that induces the release of T-cell-attracting chemokines from monocytes and, in particular, enhances the maturation of CD11c(+) dendritic cells. Can induce allergic inflammation by directly activating mast cells. The polypeptide is Thymic stromal lymphopoietin (Tslp) (Mus musculus (Mouse)).